We begin with the raw amino-acid sequence, 324 residues long: Lactonase drp35 (324 aa).

Ca(2+)-binding residues include Glu-47, Ser-109, Gly-111, Asp-129, Thr-132, Tyr-134, Asp-137, Asn-184, Asp-235, and Ser-236. The active-site Proton donor is the Asp-235.

This sequence belongs to the SMP-30/CGR1 family. Requires Ca(2+) as cofactor.

Its subcellular location is the cytoplasm. In terms of biological role, exhibits lactonase activity. Acts in cells with perturbed membrane integrity and is possibly related to the membrane homeostasis. This is Lactonase drp35 (drp35) from Staphylococcus aureus (strain USA300).